Here is a 24-residue protein sequence, read N- to C-terminus: Coenzyme PQQ synthesis protein A (24 aa).

A cross-link (pyrroloquinoline quinone (Glu-Tyr)) is located at residues 16–20; sequence EVTMY.

This sequence belongs to the PqqA family.

The protein operates within cofactor biosynthesis; pyrroloquinoline quinone biosynthesis. Functionally, required for coenzyme pyrroloquinoline quinone (PQQ) biosynthesis. PQQ is probably formed by cross-linking a specific glutamate to a specific tyrosine residue and excising these residues from the peptide. This Pseudomonas syringae pv. syringae (strain B728a) protein is Coenzyme PQQ synthesis protein A.